The primary structure comprises 517 residues: Bifunctional purine biosynthesis protein PurH (517 aa).

The MGS-like domain occupies 1 to 145 (MSPLALVSVS…KNHKDVSVLV (145 aa)).

Belongs to the PurH family.

The enzyme catalyses (6R)-10-formyltetrahydrofolate + 5-amino-1-(5-phospho-beta-D-ribosyl)imidazole-4-carboxamide = 5-formamido-1-(5-phospho-D-ribosyl)imidazole-4-carboxamide + (6S)-5,6,7,8-tetrahydrofolate. The catalysed reaction is IMP + H2O = 5-formamido-1-(5-phospho-D-ribosyl)imidazole-4-carboxamide. It functions in the pathway purine metabolism; IMP biosynthesis via de novo pathway; 5-formamido-1-(5-phospho-D-ribosyl)imidazole-4-carboxamide from 5-amino-1-(5-phospho-D-ribosyl)imidazole-4-carboxamide (10-formyl THF route): step 1/1. It participates in purine metabolism; IMP biosynthesis via de novo pathway; IMP from 5-formamido-1-(5-phospho-D-ribosyl)imidazole-4-carboxamide: step 1/1. In Prochlorococcus marinus subsp. pastoris (strain CCMP1986 / NIES-2087 / MED4), this protein is Bifunctional purine biosynthesis protein PurH.